Reading from the N-terminus, the 261-residue chain is Triosephosphate isomerase (261 aa).

10–12 (NWK) serves as a coordination point for substrate. The active-site Electrophile is the histidine 100. Residue glutamate 172 is the Proton acceptor of the active site. Residues glycine 178, serine 218, and 239 to 240 (GG) contribute to the substrate site.

Belongs to the triosephosphate isomerase family. Homodimer.

The protein resides in the cytoplasm. The catalysed reaction is D-glyceraldehyde 3-phosphate = dihydroxyacetone phosphate. It participates in carbohydrate biosynthesis; gluconeogenesis. Its pathway is carbohydrate degradation; glycolysis; D-glyceraldehyde 3-phosphate from glycerone phosphate: step 1/1. Functionally, involved in the gluconeogenesis. Catalyzes stereospecifically the conversion of dihydroxyacetone phosphate (DHAP) to D-glyceraldehyde-3-phosphate (G3P). The protein is Triosephosphate isomerase of Mycobacterium leprae (strain TN).